We begin with the raw amino-acid sequence, 803 residues long: MDTSQDIVIADSNTTDNVEVRSISPRVAAIFDDIYYFFYKEIDIEFTRYTDNKLISERMYGKRIDFFISILYITRNIIESYNNVELLKCFFKMLNHCSKPNENIENFLMKLFTYLHSDSILDNIEIIRALRDNKLKIRRETQDYLNQILDKFYKKPKEAEERDGDDGLPMEFVRQDTLSKLFREIYNDIRDLLPEPIQVRHLLSRNIDGTFKLKEVLFYEFDRVSEDHWFYDDGKQSNIYSPEEINNNTNNKNSVLLDANDKNENNNNNNDDADDAAADDADDADDDDMDDESDSNNNNKNSNNKNSNNKNSNENNKNKRTKSSSKSPQLPGLWTDEECRSLIKAVMIIGHRWIKIKEDYYSTSKRKPSQLKDKMRSLRKRYGDIKNIAIAYFTKAEIIEIEKLAVLFQQKEEAQKLAKEKIDSLSNIKSTSNTSAASGHNKGKNENNDSDEEVDQDSDNDSNNEDNQNESESENEDENDNNEKEKEKRNKKNSAVPPAPAPPKKLKPIEEEESDEEHNDSEEDSQEDSEENEYIIKQKRKSNQIKSSPKKLKTNQSVDKSEDVNQSHKSKLKSKPQRKVEKEESEKEESEEEESEEEEEEDDEDYESEEDKKKKKSKKTPSNQTSTHTTTTTTTTRKSNTKPIVVSSEEDSSDEEEKRRTKTLSKKSNQTPTTPTKKPSQTPTTPTKKSNQTPTTPTKKPSQTPITPTKKPNQTPTTPTKKSSQTPITPTKKSTNRPKSIEEEENEQEEQHEKNQNKPLKKRVSEDWSNSSDKTSNKRFKSPETLNKDSKENKKTISNSRRK.

Disordered regions lie at residues 237-333 and 429-803; these read SNIY…LPGL and KSTS…SRRK. A coiled-coil region spans residues 258–323; sequence DANDKNENNN…ENNKNKRTKS (66 aa). Residues 271–294 show a composition bias toward acidic residues; the sequence is DDADDAAADDADDADDDDMDDESD. The span at 295–315 shows a compositional bias: low complexity; it reads SNNNNKNSNNKNSNNKNSNEN. Residues 332-379 enclose the Myb-like domain; sequence GLWTDEECRSLIKAVMIIGHRWIKIKEDYYSTSKRKPSQLKDKMRSLR. Coiled-coil stretches lie at residues 400 to 429 and 463 to 496; these read EIEK…SNIK and NNED…NSAV. Residues 429 to 438 show a composition bias toward polar residues; sequence KSTSNTSAAS. Acidic residues-rich tracts occupy residues 448-480 and 510-533; these read NDSD…DEND and EEEE…EENE. Basic residues-rich tracts occupy residues 537-553 and 568-577; these read KQKR…KKLK and HKSKLKSKPQ. Residues 573–616 adopt a coiled-coil conformation; that stretch reads KSKPQRKVEKEESEKEESEEEESEEEEEEDDEDYESEEDKKKKK. The span at 586–609 shows a compositional bias: acidic residues; sequence EKEESEEEESEEEEEEDDEDYESE. Low complexity-rich tracts occupy residues 625-636 and 666-733; these read TSTHTTTTTTTT and KKSN…PTKK. Over residues 786–795 the composition is skewed to basic and acidic residues; that stretch reads LNKDSKENKK.

The protein is Myb-like protein V (mybV) of Dictyostelium discoideum (Social amoeba).